The chain runs to 242 residues: Beta-glucanase (242 aa).

Residues 1–28 form the signal peptide; that stretch reads MPYLKRVLLLLVTGLFMSLFAVTATASA. Glutamine 29 is modified (pyrrolidone carboxylic acid). Residues 29–242 enclose the GH16 domain; that stretch reads QTGGSFFDPF…HYDWVRYTKK (214 aa). A disulfide bridge links cysteine 60 with cysteine 89. Catalysis depends on glutamate 133, which acts as the Nucleophile. Glutamate 137 acts as the Proton donor in catalysis.

Belongs to the glycosyl hydrolase 16 family.

The protein resides in the secreted. The enzyme catalyses Hydrolysis of (1-&gt;4)-beta-D-glucosidic linkages in beta-D-glucans containing (1-&gt;3)- and (1-&gt;4)-bonds.. The polypeptide is Beta-glucanase (bglS) (Bacillus subtilis (strain 168)).